We begin with the raw amino-acid sequence, 235 residues long: Leucyl/phenylalanyl-tRNA--protein transferase (235 aa).

The protein belongs to the L/F-transferase family.

It localises to the cytoplasm. It catalyses the reaction N-terminal L-lysyl-[protein] + L-leucyl-tRNA(Leu) = N-terminal L-leucyl-L-lysyl-[protein] + tRNA(Leu) + H(+). The enzyme catalyses N-terminal L-arginyl-[protein] + L-leucyl-tRNA(Leu) = N-terminal L-leucyl-L-arginyl-[protein] + tRNA(Leu) + H(+). The catalysed reaction is L-phenylalanyl-tRNA(Phe) + an N-terminal L-alpha-aminoacyl-[protein] = an N-terminal L-phenylalanyl-L-alpha-aminoacyl-[protein] + tRNA(Phe). In terms of biological role, functions in the N-end rule pathway of protein degradation where it conjugates Leu, Phe and, less efficiently, Met from aminoacyl-tRNAs to the N-termini of proteins containing an N-terminal arginine or lysine. The sequence is that of Leucyl/phenylalanyl-tRNA--protein transferase from Cellvibrio japonicus (strain Ueda107) (Pseudomonas fluorescens subsp. cellulosa).